A 105-amino-acid polypeptide reads, in one-letter code: Small ribosomal subunit protein uS10 (105 aa).

The protein belongs to the universal ribosomal protein uS10 family. In terms of assembly, part of the 30S ribosomal subunit.

Functionally, involved in the binding of tRNA to the ribosomes. The chain is Small ribosomal subunit protein uS10 from Legionella pneumophila (strain Paris).